A 449-amino-acid chain; its full sequence is Glucose-6-phosphate isomerase (449 aa).

E291 serves as the catalytic Proton donor. Catalysis depends on residues H312 and K426.

Belongs to the GPI family.

It is found in the cytoplasm. The enzyme catalyses alpha-D-glucose 6-phosphate = beta-D-fructose 6-phosphate. It functions in the pathway carbohydrate biosynthesis; gluconeogenesis. The protein operates within carbohydrate degradation; glycolysis; D-glyceraldehyde 3-phosphate and glycerone phosphate from D-glucose: step 2/4. Its function is as follows. Catalyzes the reversible isomerization of glucose-6-phosphate to fructose-6-phosphate. This Streptococcus pneumoniae serotype 19F (strain G54) protein is Glucose-6-phosphate isomerase.